Reading from the N-terminus, the 1410-residue chain is DNA-directed RNA polymerase subunit beta' (1410 aa).

Residues Cys-70, Cys-72, Cys-85, and Cys-88 each contribute to the Zn(2+) site. Mg(2+) is bound by residues Asp-460, Asp-462, and Asp-464. Zn(2+) is bound by residues Cys-814, Cys-888, Cys-895, and Cys-898.

It belongs to the RNA polymerase beta' chain family. In terms of assembly, the RNAP catalytic core consists of 2 alpha, 1 beta, 1 beta' and 1 omega subunit. When a sigma factor is associated with the core the holoenzyme is formed, which can initiate transcription. Requires Mg(2+) as cofactor. The cofactor is Zn(2+).

The enzyme catalyses RNA(n) + a ribonucleoside 5'-triphosphate = RNA(n+1) + diphosphate. Its function is as follows. DNA-dependent RNA polymerase catalyzes the transcription of DNA into RNA using the four ribonucleoside triphosphates as substrates. This is DNA-directed RNA polymerase subunit beta' from Saccharophagus degradans (strain 2-40 / ATCC 43961 / DSM 17024).